The primary structure comprises 252 residues: 2-succinyl-6-hydroxy-2,4-cyclohexadiene-1-carboxylate synthase (252 aa).

Belongs to the AB hydrolase superfamily. MenH family. In terms of assembly, monomer.

It carries out the reaction 5-enolpyruvoyl-6-hydroxy-2-succinyl-cyclohex-3-ene-1-carboxylate = (1R,6R)-6-hydroxy-2-succinyl-cyclohexa-2,4-diene-1-carboxylate + pyruvate. Its pathway is quinol/quinone metabolism; 1,4-dihydroxy-2-naphthoate biosynthesis; 1,4-dihydroxy-2-naphthoate from chorismate: step 3/7. The protein operates within quinol/quinone metabolism; menaquinone biosynthesis. Its function is as follows. Catalyzes a proton abstraction reaction that results in 2,5-elimination of pyruvate from 2-succinyl-5-enolpyruvyl-6-hydroxy-3-cyclohexene-1-carboxylate (SEPHCHC) and the formation of 2-succinyl-6-hydroxy-2,4-cyclohexadiene-1-carboxylate (SHCHC). This Shigella flexneri serotype 5b (strain 8401) protein is 2-succinyl-6-hydroxy-2,4-cyclohexadiene-1-carboxylate synthase.